Consider the following 278-residue polypeptide: Ankyrin repeat and SOCS box protein 13 (278 aa).

6 ANK repeats span residues 18 to 47, 51 to 80, 84 to 113, 116 to 145, 149 to 178, and 181 to 210; these read VERT…CVNQ, DSIT…QVDA, DGST…KVNP, YTAS…NLEA, HFGT…NVNA, and LHET…NIYA. Residues 229–278 enclose the SOCS box domain; the sequence is AKCFEYYEKTPLTLSQLCRVNLRKATGVRGLEKIAKLNIPPRLIDYLSYN.

It belongs to the ankyrin SOCS box (ASB) family.

It participates in protein modification; protein ubiquitination. May be a substrate-recognition component of a SCF-like ECS (Elongin-Cullin-SOCS-box protein) E3 ubiquitin-protein ligase complex which mediates the ubiquitination and subsequent proteasomal degradation of target proteins. In Homo sapiens (Human), this protein is Ankyrin repeat and SOCS box protein 13 (ASB13).